The following is a 335-amino-acid chain: Homeobox protein DBX1 (335 aa).

2 disordered regions span residues R56–A102 and K240–S335. A compositionally biased stretch (low complexity) spans G83–P95. The segment at residues G181–K240 is a DNA-binding region (homeobox). Residues G299 to F317 show a composition bias toward low complexity. Residues S318–S335 are compositionally biased toward acidic residues.

The protein belongs to the H2.0 homeobox family.

It is found in the nucleus. In terms of biological role, could have a role in patterning the central nervous system during embryogenesis. Has a key role in regulating the distinct phenotypic features that distinguish two major classes of ventral interneurons, V0 and V1 neurons. Regulates the transcription factor profile, neurotransmitter phenotype, intraspinal migratory path and axonal trajectory of V0 neurons, features that differentiate them from an adjacent set of V1 neurons. This chain is Homeobox protein DBX1 (Dbx1), found in Rattus norvegicus (Rat).